A 394-amino-acid polypeptide reads, in one-letter code: Elongation factor Tu (394 aa).

Residues 10-204 (KPHLNVGTIG…ALDTYIPLPE (195 aa)) enclose the tr-type G domain. A G1 region spans residues 19–26 (GHVDHGKT). 19 to 26 (GHVDHGKT) contributes to the GTP binding site. Residue Thr26 coordinates Mg(2+). A G2 region spans residues 60 to 64 (GITIN). Residues 81–84 (DCPG) are G3. GTP contacts are provided by residues 81–85 (DCPGH) and 136–139 (NKCD). Residues 136 to 139 (NKCD) form a G4 region. The tract at residues 174 to 176 (SAL) is G5.

Belongs to the TRAFAC class translation factor GTPase superfamily. Classic translation factor GTPase family. EF-Tu/EF-1A subfamily. Monomer.

It localises to the cytoplasm. The catalysed reaction is GTP + H2O = GDP + phosphate + H(+). Its function is as follows. GTP hydrolase that promotes the GTP-dependent binding of aminoacyl-tRNA to the A-site of ribosomes during protein biosynthesis. The chain is Elongation factor Tu from Psychromonas ingrahamii (strain DSM 17664 / CCUG 51855 / 37).